A 150-amino-acid chain; its full sequence is MRVWIDADACPKAAKDLIVKFALKRKLEVVMVAGQPQIKPAFACVRLIVVPSGMDAADDYLVENAVPGELVICSDVPLADRLIKKGVAALDPRGREFDERNMGERLAVRNLFTELREQGQVGGGQAPYGEREKQAFANALDRILTRLAKG.

It belongs to the UPF0178 family.

The protein is UPF0178 protein PSEEN5341 of Pseudomonas entomophila (strain L48).